The sequence spans 937 residues: Isoleucine--tRNA ligase (937 aa).

The 'HIGH' region motif lies at 57-67 (PYANGPIHMGH). Residue glutamate 556 participates in L-isoleucyl-5'-AMP binding. The short motif at 597-601 (KMSKS) is the 'KMSKS' region element. Lysine 600 lines the ATP pocket. Positions 895, 898, 915, and 918 each coordinate Zn(2+).

Belongs to the class-I aminoacyl-tRNA synthetase family. IleS type 1 subfamily. As to quaternary structure, monomer. Requires Zn(2+) as cofactor.

Its subcellular location is the cytoplasm. The catalysed reaction is tRNA(Ile) + L-isoleucine + ATP = L-isoleucyl-tRNA(Ile) + AMP + diphosphate. In terms of biological role, catalyzes the attachment of isoleucine to tRNA(Ile). As IleRS can inadvertently accommodate and process structurally similar amino acids such as valine, to avoid such errors it has two additional distinct tRNA(Ile)-dependent editing activities. One activity is designated as 'pretransfer' editing and involves the hydrolysis of activated Val-AMP. The other activity is designated 'posttransfer' editing and involves deacylation of mischarged Val-tRNA(Ile). The sequence is that of Isoleucine--tRNA ligase from Levilactobacillus brevis (strain ATCC 367 / BCRC 12310 / CIP 105137 / JCM 1170 / LMG 11437 / NCIMB 947 / NCTC 947) (Lactobacillus brevis).